A 173-amino-acid chain; its full sequence is Alpha-crystallin A chain (173 aa).

Position 1 is an N-acetylmethionine (Met1). A sHSP domain is found at 53-164 (NFLDSSNSGM…GDRSIPVTRD (112 aa)). 3 residues coordinate Zn(2+): His101, Glu103, and His108. A disulfide bridge links Cys132 with Cys143. Residues 143–173 (CGPKSGGSESGRGDRSIPVTRDDKTNSTPSS) are disordered. Basic and acidic residues predominate over residues 153-167 (GRGDRSIPVTRDDKT).

Belongs to the small heat shock protein (HSP20) family. In terms of assembly, heteropolymer composed of three CRYAA and one CRYAB subunits. Inter-subunit bridging via zinc ions enhances stability, which is crucial as there is no protein turn over in the lens. Zinc coordination is achieved at least by His-101, Glu-103 and His-108. His-101 and Glu-103 come from the same molecule within the oligomer, while His-108 residue is provided by another molecule. Can also form homodimers and homotetramers (dimers of dimers) which serve as the building blocks of homooligomers. Part of a complex required for lens intermediate filament formation composed of BFSP1, BFSP2 and CRYAA.

The protein localises to the cytoplasm. The protein resides in the nucleus. Its function is as follows. Contributes to the transparency and refractive index of the lens. May act as a chaperone, preventing aggregation of various proteins under a wide range of stress conditions. The protein is Alpha-crystallin A chain (cryaa) of Psalidodon fasciatus (Banded astyanax).